A 984-amino-acid chain; its full sequence is MKIYPYNELKTRFAEYAKPGEFNITSADTFRIIRLHYDEKQGCLFAFCNTNIKERVLQFYFKVKLNLYSYKQCYDKHIFPSCRNKCISYTTFVAPGVEGNYLNKINVIKYERNKAAPSDNAACLDKFLHNVNRVHMQTPFVEGAYMRFKKTQRCQNNYVGGSTTRMFNLQHFNEDFELVDEMTLTSGIMPVLSCYDIETHSDGHNMSKASVDCIMSIGFVVYKNDEYAKFCFMYHKLPTQIPETYDDDTYVVMFQNEIDMITAFFDMIKITNPDVILDFNGDVFDLPYILGRLNKTKMLLKRYDLPAAAPTTKLFINKLGNKVDTYYFNYYIHIDLYKFFSSDSNQHKVENFQLNTISSYYLGENKIDLPWTEMVKMYNTRRLDVIAKYNVQDCMLPIKLFVKLKMADSVYSQCILHRLCTDDVICNISHLISVACFYAAITNTRINESTGKEEPDPYFFNKNDLSIISGQFKADKAAAGISNLKRKLIPLKNIPKDAINLGPANQTVKYKGGKVLKPRAGIYKNAFSLDFNSLYLTIMIAICACLSNLILCEDGNVYLNHNSRAIVVKLLLKLLSERCKFKKNRDNQSESAFLYDLYDQKQNSVKRTANSIYGYYGIFYKVLANYITRVGRNQLRLAISLIEGLSNDPEILEKFNLGSITFKVVYGDTDSTFVLPTFNYNEISNETDTLKQICTHVETRVNNSFTDGYKMAFENLMKVLILLKKKKYCYLNSENKIVYKGWLVKKDMPVFMRIAFRTAVEQILRHLDMDKCLQSLQTSFYEYYDEFAKSKSLTDYSFSMTYNDNPGKKRKSTDDNEGPSPKRRVITVARHCREILVNKGTDFVPGNGDRIPYLLIDIEGKVTEKAYPLRLFDPVKMRISWIKHMGILCTFMNELLEIFGDEQKDKIAKCFTAIMQKYMQNQLYDRKEPVLVKINQKKCSVKRKRDDDDDNDDDDDDDCDSSDSENDTQCANNTYKFCLYKMKK.

The bipartite nuclear localization signal stretch occupies residues 804–827; the sequence is DNPGKKRKSTDDNEGPSPKRRVIT. The monopartite nuclear localization signal stretch occupies residues 939-948; the sequence is CSVKRKRDDD. Residues 943–969 form a disordered region; sequence RKRDDDDDNDDDDDDDCDSSDSENDTQ. Acidic residues predominate over residues 947-966; the sequence is DDDDNDDDDDDDCDSSDSEN.

It belongs to the DNA polymerase type-B family.

It localises to the host nucleus. It carries out the reaction DNA(n) + a 2'-deoxyribonucleoside 5'-triphosphate = DNA(n+1) + diphosphate. Replicates the viral genome, host DNA polymerases cannot substitute for the viral enzyme in this process. This is DNA polymerase (POL) from Autographa californica nuclear polyhedrosis virus (AcMNPV).